A 290-amino-acid polypeptide reads, in one-letter code: Outer dense fiber protein 4 (290 aa).

Ser-28 is modified (phosphoserine). 4 helical membrane passes run 44-64 (AQVVASEFSLVAFLLLLVMVF), 125-145 (PVFGVAKISFTLAIGLGFVLT), 164-184 (LIGIILSFCEVTLIFLTLLLF), and 201-221 (IGWSYFIGWLVLILYFTCGIL). The tract at residues 247-290 (GPESLVSPSQTPSSQENSQESPKDDQKPSSPDKVVSPPQPDTTG) is disordered. A compositionally biased stretch (polar residues) spans 252–266 (VSPSQTPSSQENSQE).

Expressed in testis.

The protein resides in the membrane. In terms of biological role, component of the outer dense fibers (ODF) of spermatozoa which could be involved in sperm tail structure, sperm movement and general organization of cellular cytoskeleton. This is Outer dense fiber protein 4 (Odf4) from Mus musculus (Mouse).